Reading from the N-terminus, the 159-residue chain is SsrA-binding protein (159 aa).

This sequence belongs to the SmpB family.

It is found in the cytoplasm. In terms of biological role, required for rescue of stalled ribosomes mediated by trans-translation. Binds to transfer-messenger RNA (tmRNA), required for stable association of tmRNA with ribosomes. tmRNA and SmpB together mimic tRNA shape, replacing the anticodon stem-loop with SmpB. tmRNA is encoded by the ssrA gene; the 2 termini fold to resemble tRNA(Ala) and it encodes a 'tag peptide', a short internal open reading frame. During trans-translation Ala-aminoacylated tmRNA acts like a tRNA, entering the A-site of stalled ribosomes, displacing the stalled mRNA. The ribosome then switches to translate the ORF on the tmRNA; the nascent peptide is terminated with the 'tag peptide' encoded by the tmRNA and targeted for degradation. The ribosome is freed to recommence translation, which seems to be the essential function of trans-translation. This chain is SsrA-binding protein, found in Mycobacteroides abscessus (strain ATCC 19977 / DSM 44196 / CCUG 20993 / CIP 104536 / JCM 13569 / NCTC 13031 / TMC 1543 / L948) (Mycobacterium abscessus).